A 309-amino-acid polypeptide reads, in one-letter code: Ornithine carbamoyltransferase (309 aa).

Carbamoyl phosphate-binding positions include 57–60 (STRT), Gln-84, Arg-108, and 135–138 (HPCQ). L-ornithine contacts are provided by residues Asn-166, Asp-224, and 228 to 229 (SM). Carbamoyl phosphate-binding positions include 264-265 (CL) and Arg-292.

Belongs to the aspartate/ornithine carbamoyltransferase superfamily. OTCase family.

It localises to the cytoplasm. The catalysed reaction is carbamoyl phosphate + L-ornithine = L-citrulline + phosphate + H(+). It functions in the pathway amino-acid biosynthesis; L-arginine biosynthesis; L-arginine from L-ornithine and carbamoyl phosphate: step 1/3. In terms of biological role, reversibly catalyzes the transfer of the carbamoyl group from carbamoyl phosphate (CP) to the N(epsilon) atom of ornithine (ORN) to produce L-citrulline. The sequence is that of Ornithine carbamoyltransferase from Paracidovorax citrulli (strain AAC00-1) (Acidovorax citrulli).